We begin with the raw amino-acid sequence, 84 residues long: Defensin-like protein 49 (84 aa).

An N-terminal signal peptide occupies residues 1 to 29 (MGITKSLMIFFHIVLLAVSLSNNIILTSG). 4 cysteine pairs are disulfide-bonded: cysteine 40/cysteine 82, cysteine 44/cysteine 68, cysteine 54/cysteine 80, and cysteine 58/cysteine 81.

It belongs to the DEFL family.

It is found in the secreted. This Arabidopsis thaliana (Mouse-ear cress) protein is Defensin-like protein 49.